The chain runs to 170 residues: Photosystem I assembly protein Ycf3 (170 aa).

3 TPR repeats span residues 35–68, 72–105, and 120–153; these read AFTY…EIDP, SYIL…NPFL, and GEQA…TPGN.

Belongs to the Ycf3 family.

The protein resides in the plastid. The protein localises to the chloroplast thylakoid membrane. Essential for the assembly of the photosystem I (PSI) complex. May act as a chaperone-like factor to guide the assembly of the PSI subunits. This chain is Photosystem I assembly protein Ycf3, found in Zea mays (Maize).